The chain runs to 993 residues: Glycogen phosphorylase 2 (993 aa).

A disordered region spans residues 1 to 82 (MEEKRSTNSP…SNQSEDPATQ (82 aa)). Polar residues predominate over residues 19–48 (RSGSITSATSHPPRSNSNPKLVAKHQQQLY). A compositionally biased stretch (low complexity) spans 58–77 (EQQNQQPQQQQQKQTSNQSE). Lys-763 is modified (N6-(pyridoxal phosphate)lysine). The segment covering 962-981 (VISGGDKTNNTLKPKQTTKG) has biased composition (polar residues). Positions 962-993 (VISGGDKTNNTLKPKQTTKGFNIGGQPGNPTN) are disordered. Over residues 983 to 993 (NIGGQPGNPTN) the composition is skewed to gly residues.

The protein belongs to the glycogen phosphorylase family. Homodimer. Pyridoxal 5'-phosphate serves as cofactor. In terms of processing, the N-terminus is blocked. Enzyme activity requires processing of the 113 kDa peptide to an enzymatically active 106 kDa form of the protein. Processing would occur near the middle of the Gln-rich repetitive element.

It catalyses the reaction [(1-&gt;4)-alpha-D-glucosyl](n) + phosphate = [(1-&gt;4)-alpha-D-glucosyl](n-1) + alpha-D-glucose 1-phosphate. Phosphorylase is an important allosteric enzyme in carbohydrate metabolism. Enzymes from different sources differ in their regulatory mechanisms and in their natural substrates. However, all known phosphorylases share catalytic and structural properties. The sequence is that of Glycogen phosphorylase 2 (glpD) from Dictyostelium discoideum (Social amoeba).